The chain runs to 621 residues: CEP295 N-terminal-like protein (621 aa).

The interval 142–253 (GGRARENEPD…RSKGADLERS (112 aa)) is disordered. Positions 159–170 (RSARPPRAKEKH) are enriched in basic residues. Basic and acidic residues predominate over residues 171 to 185 (RAALSEERSCREELG). Residues 203–213 (KPQTTKATGRM) show a composition bias toward polar residues. Residues 219–229 (PPEKRKGRPEP) are compositionally biased toward basic and acidic residues. Positions 328-359 (QCTLREKNKWQKELELAFEELFNINRKLKKHL) form a coiled coil. Disordered stretches follow at residues 385 to 421 (CGAG…ASKT), 491 to 529 (DQAD…PDMS), and 543 to 586 (REQR…DRHS). Positions 498-525 (STASRQRQKAEMEQRRQKQLESLEQMEH) form a coiled coil. Over residues 505-529 (QKAEMEQRRQKQLESLEQMEHPDMS) the composition is skewed to basic and acidic residues. The span at 568–578 (ELSTTSPSGTS) shows a compositional bias: polar residues.

It localises to the cell projection. It is found in the cilium. This Homo sapiens (Human) protein is CEP295 N-terminal-like protein.